A 130-amino-acid polypeptide reads, in one-letter code: Small ribosomal subunit protein uS9 (130 aa).

It belongs to the universal ribosomal protein uS9 family.

The chain is Small ribosomal subunit protein uS9 from Buchnera aphidicola subsp. Baizongia pistaciae (strain Bp).